Here is a 350-residue protein sequence, read N- to C-terminus: Protein O-mannose kinase (350 aa).

Methionine 1 carries the post-translational modification N-acetylmethionine. Residues 1–20 lie on the Cytoplasmic side of the membrane; the sequence is MEKQPQNSRRGLAPREVPPA. The helical; Signal-anchor for type II membrane protein transmembrane segment at 21–43 threads the bilayer; sequence VGLLLIMALMNTLLYLCLDHFFI. At 44-350 the chain is on the lumenal side; sequence APRQSTVDPT…AMMSQAREML (307 aa). The 270-residue stretch at 81–350 folds into the Protein kinase domain; that stretch reads VRQLKRVGEG…AMMSQAREML (270 aa). Residues asparagine 165, asparagine 220, and asparagine 235 are each glycosylated (N-linked (GlcNAc...) asparagine).

The protein belongs to the protein kinase superfamily. Ser/Thr protein kinase family. STKL subfamily. In terms of tissue distribution, highest expression is observed in brain, skeletal muscle, kidney and heart in fetal and adult tissues.

The protein resides in the endoplasmic reticulum membrane. It catalyses the reaction 3-O-[beta-D-GalNAc-(1-&gt;3)-beta-D-GlcNAc-(1-&gt;4)-alpha-D-Man]-L-Thr-[protein] + ATP = 3-O-[beta-D-GalNAc-(1-&gt;3)-beta-D-GlcNAc-(1-&gt;4)-(O-6-P-alpha-D-Man)]-Thr-[protein] + ADP + H(+). Functionally, protein O-mannose kinase that specifically mediates phosphorylation at the 6-position of an O-mannose of the trisaccharide (N-acetylgalactosamine (GalNAc)-beta-1,3-N-acetylglucosamine (GlcNAc)-beta-1,4-mannose) to generate phosphorylated O-mannosyl trisaccharide (N-acetylgalactosamine-beta-1,3-N-acetylglucosamine-beta-1,4-(phosphate-6-)mannose). Phosphorylated O-mannosyl trisaccharide is a carbohydrate structure present in alpha-dystroglycan (DAG1), which is required for binding laminin G-like domain-containing extracellular proteins with high affinity. Only shows kinase activity when the GalNAc-beta-3-GlcNAc-beta-terminus is linked to the 4-position of O-mannose, suggesting that this disaccharide serves as the substrate recognition motif. The chain is Protein O-mannose kinase (POMK) from Homo sapiens (Human).